The sequence spans 190 residues: Pyridoxal 5'-phosphate synthase subunit PdxT (190 aa).

46–48 (GES) provides a ligand contact to L-glutamine. The active-site Nucleophile is Cys78. L-glutamine is bound by residues Arg108 and 137–138 (IR). Catalysis depends on charge relay system residues His174 and Glu176.

This sequence belongs to the glutaminase PdxT/SNO family. In the presence of PdxS, forms a dodecamer of heterodimers. Only shows activity in the heterodimer.

The enzyme catalyses aldehydo-D-ribose 5-phosphate + D-glyceraldehyde 3-phosphate + L-glutamine = pyridoxal 5'-phosphate + L-glutamate + phosphate + 3 H2O + H(+). The catalysed reaction is L-glutamine + H2O = L-glutamate + NH4(+). The protein operates within cofactor biosynthesis; pyridoxal 5'-phosphate biosynthesis. In terms of biological role, catalyzes the hydrolysis of glutamine to glutamate and ammonia as part of the biosynthesis of pyridoxal 5'-phosphate. The resulting ammonia molecule is channeled to the active site of PdxS. This Chloroflexus aggregans (strain MD-66 / DSM 9485) protein is Pyridoxal 5'-phosphate synthase subunit PdxT.